A 640-amino-acid chain; its full sequence is Threonine--tRNA ligase (640 aa).

The region spanning 1–60 (MKITFPDGAVKEFEPGVSTADIAASISPGLKKKALAGKLNGELLDLVTPIHEDGAIEIVT) is the TGS domain. The interval 241 to 538 (DHRKLGKELE…LIEEYKGAFP (298 aa)) is catalytic. Positions 334, 385, and 515 each coordinate Zn(2+).

Belongs to the class-II aminoacyl-tRNA synthetase family. In terms of assembly, homodimer. It depends on Zn(2+) as a cofactor.

The protein localises to the cytoplasm. It catalyses the reaction tRNA(Thr) + L-threonine + ATP = L-threonyl-tRNA(Thr) + AMP + diphosphate + H(+). Its function is as follows. Catalyzes the attachment of threonine to tRNA(Thr) in a two-step reaction: L-threonine is first activated by ATP to form Thr-AMP and then transferred to the acceptor end of tRNA(Thr). Also edits incorrectly charged L-seryl-tRNA(Thr). The chain is Threonine--tRNA ligase from Listeria monocytogenes serovar 1/2a (strain ATCC BAA-679 / EGD-e).